Here is a 278-residue protein sequence, read N- to C-terminus: MYFEITGQNSPAAKTVVLSAGLGGSGRFWQPQLSALGQHFRVITYDQYGTGRSAGVIPSGYTLADMADELADLLASQHIERYHFVGHALGGMIGLQLALSHPQCVERLVAINSWPVLDSQTRRCFHVRQDLLLNSGVAAYVRAQPLFLYPADWLSRNTLLLEQEEVQQIAHFQGMENLLRRLNALMNADFRSVLPHITTPTLALCATDDLLVPYPCSQALAELLPDGEWAQMSYGGHAMSVTNSEQFNGILLSYLLMDTGIAKCELALNQSNTSAIHL.

Belongs to the AB hydrolase superfamily. Hydrolase RutD family.

It carries out the reaction carbamate + 2 H(+) = NH4(+) + CO2. Involved in pyrimidine catabolism. May facilitate the hydrolysis of carbamate, a reaction that can also occur spontaneously. The polypeptide is Putative carbamate hydrolase RutD (Yersinia enterocolitica serotype O:8 / biotype 1B (strain NCTC 13174 / 8081)).